A 285-amino-acid polypeptide reads, in one-letter code: Glutamate racemase (285 aa).

Substrate is bound by residues 28 to 29 (DS) and 60 to 61 (YG). The Proton donor/acceptor role is filled by Cys92. 93–94 (NT) provides a ligand contact to substrate. Catalysis depends on Cys204, which acts as the Proton donor/acceptor. 205 to 206 (TH) provides a ligand contact to substrate.

The protein belongs to the aspartate/glutamate racemases family.

It carries out the reaction L-glutamate = D-glutamate. The protein operates within cell wall biogenesis; peptidoglycan biosynthesis. Its function is as follows. Provides the (R)-glutamate required for cell wall biosynthesis. The chain is Glutamate racemase from Escherichia coli O9:H4 (strain HS).